We begin with the raw amino-acid sequence, 299 residues long: NAD kinase (299 aa).

Asp71 acts as the Proton acceptor in catalysis. Residues 71-72 (DG), 145-146 (ND), Arg173, Asp175, 186-191 (TAYSLS), Ala210, and Gln248 contribute to the NAD(+) site.

It belongs to the NAD kinase family. A divalent metal cation serves as cofactor.

It is found in the cytoplasm. It catalyses the reaction NAD(+) + ATP = ADP + NADP(+) + H(+). Functionally, involved in the regulation of the intracellular balance of NAD and NADP, and is a key enzyme in the biosynthesis of NADP. Catalyzes specifically the phosphorylation on 2'-hydroxyl of the adenosine moiety of NAD to yield NADP. This Bordetella pertussis (strain Tohama I / ATCC BAA-589 / NCTC 13251) protein is NAD kinase.